The following is an 88-amino-acid chain: Large ribosomal subunit protein bL27 (88 aa).

The protein belongs to the bacterial ribosomal protein bL27 family.

In Carboxydothermus hydrogenoformans (strain ATCC BAA-161 / DSM 6008 / Z-2901), this protein is Large ribosomal subunit protein bL27.